The following is a 514-amino-acid chain: Bifunctional purine biosynthesis protein PurH (514 aa).

Residues 1–146 (MPPLALLSTS…KNFAHVTVLC (146 aa)) form the MGS-like domain.

Belongs to the PurH family.

The enzyme catalyses (6R)-10-formyltetrahydrofolate + 5-amino-1-(5-phospho-beta-D-ribosyl)imidazole-4-carboxamide = 5-formamido-1-(5-phospho-D-ribosyl)imidazole-4-carboxamide + (6S)-5,6,7,8-tetrahydrofolate. It catalyses the reaction IMP + H2O = 5-formamido-1-(5-phospho-D-ribosyl)imidazole-4-carboxamide. The protein operates within purine metabolism; IMP biosynthesis via de novo pathway; 5-formamido-1-(5-phospho-D-ribosyl)imidazole-4-carboxamide from 5-amino-1-(5-phospho-D-ribosyl)imidazole-4-carboxamide (10-formyl THF route): step 1/1. Its pathway is purine metabolism; IMP biosynthesis via de novo pathway; IMP from 5-formamido-1-(5-phospho-D-ribosyl)imidazole-4-carboxamide: step 1/1. The protein is Bifunctional purine biosynthesis protein PurH of Cyanothece sp. (strain PCC 7425 / ATCC 29141).